The chain runs to 237 residues: uncharacterized protein (237 aa).

The next 7 helical transmembrane spans lie at 19–39 (ILNG…GLAW), 51–71 (YDSP…YGLS), 81–101 (IAGV…ASLV), 106–126 (IIIV…AGLL), 136–156 (FIIM…AALM), 159–179 (RPIW…ISHG), and 209–229 (LYYY…TLVW).

Its subcellular location is the cell membrane. This is an uncharacterized protein from Escherichia coli (strain K12).